The chain runs to 196 residues: Transmembrane protein 52 (196 aa).

Positions Met-1–Ala-28 are cleaved as a signal peptide. The helical transmembrane segment at Leu-47–Ala-67 threads the bilayer. The segment at Glu-162 to Pro-196 is disordered.

Its subcellular location is the membrane. The chain is Transmembrane protein 52 (Tmem52) from Mus musculus (Mouse).